Reading from the N-terminus, the 192-residue chain is Ion-translocating oxidoreductase complex subunit A (192 aa).

A run of 6 helical transmembrane segments spans residues 5 to 25 (VLLLVGTVLVNNFVLVKFLGL), 39 to 59 (IGMGLATTFVLTLASVCAYLV), 67 to 87 (LGIEYLRTMSFILVIAVVVQF), 102 to 122 (LLGIFLPLITTNCAVLGVALL), 134 to 154 (IIYGFGAAVGFSLVLILFASM), and 171 to 191 (SIAMITAGLMSLAFMGFTGLV).

This sequence belongs to the NqrDE/RnfAE family. The complex is composed of six subunits: RnfA, RnfB, RnfC, RnfD, RnfE and RnfG.

The protein resides in the cell inner membrane. In terms of biological role, part of a membrane-bound complex that couples electron transfer with translocation of ions across the membrane. The chain is Ion-translocating oxidoreductase complex subunit A from Vibrio parahaemolyticus serotype O3:K6 (strain RIMD 2210633).